Here is a 202-residue protein sequence, read N- to C-terminus: Large ribosomal subunit protein mL40 (202 aa).

The interval 42–79 (IQHQQTASYASKGKSGPPAGMFSGQKAGSKKSKGPKQV) is disordered.

This sequence belongs to the mitochondrion-specific ribosomal protein mL40 family. As to quaternary structure, component of the mitochondrial large ribosomal subunit (mt-LSU). Mature N.crassa 74S mitochondrial ribosomes consist of a small (37S) and a large (54S) subunit. The 37S small subunit contains a 16S ribosomal RNA (16S mt-rRNA) and 32 different proteins. The 54S large subunit contains a 23S rRNA (23S mt-rRNA) and 42 different proteins. mL40 is binding to NAD.

The protein localises to the mitochondrion. Its function is as follows. Component of the mitochondrial ribosome (mitoribosome), a dedicated translation machinery responsible for the synthesis of mitochondrial genome-encoded proteins, including at least some of the essential transmembrane subunits of the mitochondrial respiratory chain. The mitoribosomes are attached to the mitochondrial inner membrane and translation products are cotranslationally integrated into the membrane. The protein is Large ribosomal subunit protein mL40 (mrpl28) of Neurospora crassa (strain ATCC 24698 / 74-OR23-1A / CBS 708.71 / DSM 1257 / FGSC 987).